The following is a 335-amino-acid chain: HTH-type transcriptional regulator MalR (335 aa).

One can recognise an HTH lacI-type domain in the interval 1 to 55; that stretch reads MNIKDIARLSGVGVSTVSRVINNHPDVKQSTREKVLQIIKDSNYIPNNSARILKQ. The segment at residues 3–22 is a DNA-binding region (H-T-H motif); it reads IKDIARLSGVGVSTVSRVIN.

Its function is as follows. Repressor of glucanotransferase gene expression. The sequence is that of HTH-type transcriptional regulator MalR from Clostridium butyricum.